A 471-amino-acid polypeptide reads, in one-letter code: tRNA-2-methylthio-N(6)-dimethylallyladenosine synthase (471 aa).

Positions 31–149 (LYYHIETYGC…FPQLLWEALN (119 aa)) constitute an MTTase N-terminal domain. Cysteine 40, cysteine 76, cysteine 110, cysteine 186, cysteine 190, and cysteine 193 together coordinate [4Fe-4S] cluster. Residues 172–402 (RDSNLKAWVN…IELQNKISLE (231 aa)) form the Radical SAM core domain. Residues 405–468 (AELRGKIVEV…AWTMQGELVE (64 aa)) form the TRAM domain.

It belongs to the methylthiotransferase family. MiaB subfamily. As to quaternary structure, monomer. [4Fe-4S] cluster serves as cofactor.

Its subcellular location is the cytoplasm. It catalyses the reaction N(6)-dimethylallyladenosine(37) in tRNA + (sulfur carrier)-SH + AH2 + 2 S-adenosyl-L-methionine = 2-methylsulfanyl-N(6)-dimethylallyladenosine(37) in tRNA + (sulfur carrier)-H + 5'-deoxyadenosine + L-methionine + A + S-adenosyl-L-homocysteine + 2 H(+). Catalyzes the methylthiolation of N6-(dimethylallyl)adenosine (i(6)A), leading to the formation of 2-methylthio-N6-(dimethylallyl)adenosine (ms(2)i(6)A) at position 37 in tRNAs that read codons beginning with uridine. This Thermoanaerobacter pseudethanolicus (strain ATCC 33223 / 39E) (Clostridium thermohydrosulfuricum) protein is tRNA-2-methylthio-N(6)-dimethylallyladenosine synthase.